We begin with the raw amino-acid sequence, 310 residues long: Ribose-phosphate pyrophosphokinase (310 aa).

ATP contacts are provided by residues 34 to 36 and 93 to 94; these read DQE and RQ. Positions 127 and 167 each coordinate Mg(2+). Lysine 190 is a catalytic residue. Residues arginine 192, aspartate 216, and 220 to 224 contribute to the D-ribose 5-phosphate site; that span reads DSGGT.

This sequence belongs to the ribose-phosphate pyrophosphokinase family. Class I subfamily. Homohexamer. Mg(2+) is required as a cofactor.

The protein localises to the cytoplasm. It carries out the reaction D-ribose 5-phosphate + ATP = 5-phospho-alpha-D-ribose 1-diphosphate + AMP + H(+). Its pathway is metabolic intermediate biosynthesis; 5-phospho-alpha-D-ribose 1-diphosphate biosynthesis; 5-phospho-alpha-D-ribose 1-diphosphate from D-ribose 5-phosphate (route I): step 1/1. Involved in the biosynthesis of the central metabolite phospho-alpha-D-ribosyl-1-pyrophosphate (PRPP) via the transfer of pyrophosphoryl group from ATP to 1-hydroxyl of ribose-5-phosphate (Rib-5-P). In Agrobacterium fabrum (strain C58 / ATCC 33970) (Agrobacterium tumefaciens (strain C58)), this protein is Ribose-phosphate pyrophosphokinase.